A 341-amino-acid chain; its full sequence is Serine/threonine-protein kinase PDIK1L (341 aa).

A Protein kinase domain is found at 8–334 (YDLIREVGRG…LELRLVQIAF (327 aa)). Residues 14–22 (VGRGSYGVV) and K37 contribute to the ATP site. D164 serves as the catalytic Proton acceptor.

It belongs to the protein kinase superfamily. Ser/Thr protein kinase family. In terms of tissue distribution, expressed in liver, kidney, pancreas, spleen, thymus and prostate.

The protein resides in the nucleus. It catalyses the reaction L-seryl-[protein] + ATP = O-phospho-L-seryl-[protein] + ADP + H(+). It carries out the reaction L-threonyl-[protein] + ATP = O-phospho-L-threonyl-[protein] + ADP + H(+). This chain is Serine/threonine-protein kinase PDIK1L (PDIK1L), found in Homo sapiens (Human).